The sequence spans 211 residues: Thymidylate kinase (211 aa).

An ATP-binding site is contributed by Gly-11 to Thr-18.

This sequence belongs to the thymidylate kinase family.

It catalyses the reaction dTMP + ATP = dTDP + ADP. Functionally, phosphorylation of dTMP to form dTDP in both de novo and salvage pathways of dTTP synthesis. In Streptococcus pyogenes serotype M1, this protein is Thymidylate kinase.